The chain runs to 452 residues: Ribosomal protein uS12 methylthiotransferase RimO (452 aa).

The region spanning 8-123 is the MTTase N-terminal domain; sequence PRVGFVSLGC…VMQAVHTHLP (116 aa). Residues C17, C53, C82, C154, C158, and C161 each contribute to the [4Fe-4S] cluster site. The 242-residue stretch at 140–381 folds into the Radical SAM core domain; that stretch reads LTPKHYAYLK…MEVAEEVSAR (242 aa). The TRAM domain occupies 384-452; the sequence is QRKVGQTLRV…ADGHDLWGEI (69 aa).

This sequence belongs to the methylthiotransferase family. RimO subfamily. The cofactor is [4Fe-4S] cluster.

The protein localises to the cytoplasm. It carries out the reaction L-aspartate(89)-[ribosomal protein uS12]-hydrogen + (sulfur carrier)-SH + AH2 + 2 S-adenosyl-L-methionine = 3-methylsulfanyl-L-aspartate(89)-[ribosomal protein uS12]-hydrogen + (sulfur carrier)-H + 5'-deoxyadenosine + L-methionine + A + S-adenosyl-L-homocysteine + 2 H(+). Its function is as follows. Catalyzes the methylthiolation of an aspartic acid residue of ribosomal protein uS12. The protein is Ribosomal protein uS12 methylthiotransferase RimO of Cupriavidus pinatubonensis (strain JMP 134 / LMG 1197) (Cupriavidus necator (strain JMP 134)).